We begin with the raw amino-acid sequence, 486 residues long: Serine/threonine-protein kinase 32C (486 aa).

The disordered stretch occupies residues 1 to 56 (MRSGAERRGSSAAASPGSPPPGRARPAGSDAPSALPPPAAGQPRARDSGDVRSQPR). Residues Ser-10, Ser-15, and Ser-18 each carry the phosphoserine modification. The span at 24–33 (ARPAGSDAPS) shows a compositional bias: low complexity. Positions 93 to 353 (FQILRAIGKG…LQDVQAAPAL (261 aa)) constitute a Protein kinase domain. Residues 99 to 107 (IGKGSFGKV) and Lys-122 contribute to the ATP site. Asp-216 functions as the Proton acceptor in the catalytic mechanism. A compositionally biased stretch (basic residues) spans 396 to 405 (HKKKKRLAKN). 2 disordered regions span residues 396–419 (HKKK…QSEN) and 444–486 (SQDL…AGSG).

Belongs to the protein kinase superfamily. Ser/Thr protein kinase family. The cofactor is Mg(2+).

It carries out the reaction L-seryl-[protein] + ATP = O-phospho-L-seryl-[protein] + ADP + H(+). It catalyses the reaction L-threonyl-[protein] + ATP = O-phospho-L-threonyl-[protein] + ADP + H(+). The sequence is that of Serine/threonine-protein kinase 32C from Homo sapiens (Human).